A 324-amino-acid polypeptide reads, in one-letter code: uncharacterized protein (324 aa).

This is an uncharacterized protein from Homo sapiens (Human).